The chain runs to 290 residues: Picrinine-N-methytransferase (290 aa).

An SAM motif I region spans residues 71 to 80 (MLDVGCGIGG). The short motif at 133 to 139 (DGTFDLV) is the Vacuolar targeting signal element. The tract at residues 134–142 (GTFDLVFTI) is SAM motif II. The segment at 161–170 (VAAPGAPIVI) is SAM motif III.

It belongs to the class I-like SAM-binding methyltransferase superfamily. gTMT family. Homodimer. As to expression, accumulates in tissues actively synthesizing monoterpenoid indole alkaloids (MIAs) (at protein level). Mainly expressed in young leaves and, to a lower extent, in roots and stems.

It is found in the vacuole membrane. It catalyses the reaction picrinine + S-adenosyl-L-methionine = ervincine + S-adenosyl-L-homocysteine + H(+). It participates in alkaloid biosynthesis; vindoline biosynthesis. Its function is as follows. S-adenosyl-L-methionine-dependent N-methyltransferase involved in the biosynthesis of biologically active monoterpenoid indole alkaloids (MIAs) natural products including vindoline. Catalyzes the conversion of picrinine to N-methylpicrinine (ervincine). Also accepts, with low efficiency, 21-hydroxycyclolochnericine and norajmaline as substrates. This Rauvolfia serpentina (Serpentine wood) protein is Picrinine-N-methytransferase.